Reading from the N-terminus, the 24-residue chain is Cupiennin-5a (24 aa).

As to expression, expressed by the venom gland.

The protein localises to the secreted. The protein is Cupiennin-5a of Cupiennius salei (American wandering spider).